A 651-amino-acid polypeptide reads, in one-letter code: p-hydroxybenzoic acid efflux pump subunit AaeB (651 aa).

The next 11 membrane-spanning stretches (helical) occupy residues 11-31 (FACK…WFEM), 41-61 (AAIV…SGAI), 65-85 (GLLR…IIMT), 91-111 (VVML…SSLV), 117-137 (YVFA…QSSP), 150-170 (EIIL…PRSV), 367-387 (LFWL…LGVV), 404-424 (FLIG…LVLP), 428-448 (QSLL…GIEI), 454-474 (GSLG…PMTF), and 480-500 (LDNA…IMLI).

The protein belongs to the aromatic acid exporter ArAE (TC 2.A.85) family.

It localises to the cell inner membrane. Its function is as follows. Forms an efflux pump with AaeA. Could function as a metabolic relief valve, allowing to eliminate certain compounds when they accumulate to high levels in the cell. In Musicola paradisiaca (strain Ech703) (Dickeya paradisiaca), this protein is p-hydroxybenzoic acid efflux pump subunit AaeB.